A 254-amino-acid polypeptide reads, in one-letter code: Mannose-binding protein (254 aa).

Positions 1-19 (MTLLQPFSALLLCLSLMMA) are cleaved as a signal peptide. Positions 46–99 (NGLPGRDGRDGPKGEKGDPGEGLRGLQGLPGKAGPQGLKGEVGPQGEKGQKGER) are disordered. The segment covering 51–66 (RDGRDGPKGEKGDPGE) has biased composition (basic and acidic residues). The residue at position 57 (P57) is a 4-hydroxyproline. 2 positions are modified to 5-hydroxylysine: K58 and K61. 2 O-linked (Gal...) hydroxylysine glycosylation sites follow: K58 and K61. A 4-hydroxyproline modification is found at P75. A 5-hydroxylysine mark is found at K93 and K96. One can recognise a C-type lectin domain in the interval 140–250 (VGKKMFVSTG…LDCSNSNIFI (111 aa)). 2 disulfides stabilise this stretch: C161–C252 and C229–C243.

As to quaternary structure, oligomeric complex of 3 or more homotrimers.

The protein localises to the secreted. In terms of biological role, calcium-dependent lectin involved in innate immune defense. Binds mannose, fucose and N-acetylglucosamine on different microorganisms and activates the lectin complement pathway. The polypeptide is Mannose-binding protein (Gallus gallus (Chicken)).